The chain runs to 191 residues: Holliday junction branch migration complex subunit RuvA (191 aa).

The interval 1 to 64 (MIRGVRGTLV…EDELALYGFA (64 aa)) is domain I. The tract at residues 65 to 136 (TEAELELFLS…ELRGRLPALT (72 aa)) is domain II. Positions 136 to 139 (TEVQ) are flexible linker. Residues 140–191 (AGEPIDQELVAALQALGYTAQEARQAATHPEVRRAPSLEERIVAALRQLAPP) are domain III.

Belongs to the RuvA family. Homotetramer. Forms an RuvA(8)-RuvB(12)-Holliday junction (HJ) complex. HJ DNA is sandwiched between 2 RuvA tetramers; dsDNA enters through RuvA and exits via RuvB. An RuvB hexamer assembles on each DNA strand where it exits the tetramer. Each RuvB hexamer is contacted by two RuvA subunits (via domain III) on 2 adjacent RuvB subunits; this complex drives branch migration. In the full resolvosome a probable DNA-RuvA(4)-RuvB(12)-RuvC(2) complex forms which resolves the HJ.

It is found in the cytoplasm. Its function is as follows. The RuvA-RuvB-RuvC complex processes Holliday junction (HJ) DNA during genetic recombination and DNA repair, while the RuvA-RuvB complex plays an important role in the rescue of blocked DNA replication forks via replication fork reversal (RFR). RuvA specifically binds to HJ cruciform DNA, conferring on it an open structure. The RuvB hexamer acts as an ATP-dependent pump, pulling dsDNA into and through the RuvAB complex. HJ branch migration allows RuvC to scan DNA until it finds its consensus sequence, where it cleaves and resolves the cruciform DNA. In Thermomicrobium roseum (strain ATCC 27502 / DSM 5159 / P-2), this protein is Holliday junction branch migration complex subunit RuvA.